The following is a 323-amino-acid chain: Probable cell division protein WhiA (323 aa).

The segment at residues 279–313 is a DNA-binding region (H-T-H motif); the sequence is TLKELGEMVSGGKISKSGINHRLRKLDEIAERLRA.

The protein belongs to the WhiA family.

Involved in cell division and chromosome segregation. The sequence is that of Probable cell division protein WhiA from Anoxybacillus flavithermus (strain DSM 21510 / WK1).